Here is a 314-residue protein sequence, read N- to C-terminus: Nodulation protein D 1 (314 aa).

Residues 6 to 63 enclose the HTH lysR-type domain; the sequence is LDLNLLVALDALMTERNLTAAARQINLSQPAMSAAIARLRSYFRDELFTMRGRELVPT. The H-T-H motif DNA-binding region spans 23–42; the sequence is LTAAARQINLSQPAMSAAIA.

The protein belongs to the LysR transcriptional regulatory family.

NodD regulates the expression of the nodABCFE genes which encode other nodulation proteins. NodD is also a negative regulator of its own expression. Binds flavonoids as inducers. The protein is Nodulation protein D 1 (nodD1) of Bradyrhizobium elkanii.